Here is a 437-residue protein sequence, read N- to C-terminus: 3-ketoacyl-CoA thiolase (437 aa).

Catalysis depends on Cys99, which acts as the Acyl-thioester intermediate. Residues His392 and Cys422 each act as proton acceptor in the active site.

The protein belongs to the thiolase-like superfamily. Thiolase family. Heterotetramer of two alpha chains (FadJ) and two beta chains (FadI).

It is found in the cytoplasm. It catalyses the reaction an acyl-CoA + acetyl-CoA = a 3-oxoacyl-CoA + CoA. The protein operates within lipid metabolism; fatty acid beta-oxidation. In terms of biological role, catalyzes the final step of fatty acid oxidation in which acetyl-CoA is released and the CoA ester of a fatty acid two carbons shorter is formed. The chain is 3-ketoacyl-CoA thiolase from Erwinia tasmaniensis (strain DSM 17950 / CFBP 7177 / CIP 109463 / NCPPB 4357 / Et1/99).